The sequence spans 705 residues: Polyribonucleotide nucleotidyltransferase (705 aa).

Mg(2+)-binding residues include D487 and D493. The KH domain occupies 554 to 613; sequence PKILTMAIEPDKIRDVIGPSGKQINQIIDETGVKIDIEQDGSIFISSTDNEMNKKAKQII. Positions 623 to 691 constitute an S1 motif domain; it reads GQIYLGKVKR…RQGRVNLSRK (69 aa).

Belongs to the polyribonucleotide nucleotidyltransferase family. Requires Mg(2+) as cofactor.

It is found in the cytoplasm. The enzyme catalyses RNA(n+1) + phosphate = RNA(n) + a ribonucleoside 5'-diphosphate. Involved in mRNA degradation. Catalyzes the phosphorolysis of single-stranded polyribonucleotides processively in the 3'- to 5'-direction. In Oceanobacillus iheyensis (strain DSM 14371 / CIP 107618 / JCM 11309 / KCTC 3954 / HTE831), this protein is Polyribonucleotide nucleotidyltransferase.